Here is a 281-residue protein sequence, read N- to C-terminus: MAKTRTSSLRNRRQLKTAVAATADDDKDGIFMVLLSCFKIFVCFAIVLITAVAWGLIMVLLLPWPYMRIRLGNLYGHIIGGLVIWLYGIPIEIQGSEHTKKRAIYISNHASPIDAFFVMWLAPIGTVGVAKKEVIWYPLLGQLYTLAHHIRIDRSNPAAAIQSMKEAVRVITEKNLSLIMFPEGTRSGDGRLLPFKKGFVHLALQSHLPIVPMILTGTHLAWRKGTFRVRPVPITVKYLPPINTDDWTVDKIDDYVKMIHDIYVRNLPASQKPLGSTNRSK.

3 helical membrane-spanning segments follow: residues isoleucine 40–leucine 60, leucine 71–isoleucine 91, and alanine 110–alanine 130. The HXXXXD motif motif lies at histidine 109–aspartate 114.

This sequence belongs to the 1-acyl-sn-glycerol-3-phosphate acyltransferase family.

Its subcellular location is the membrane. The enzyme catalyses a 1-acyl-sn-glycero-3-phosphate + an acyl-CoA = a 1,2-diacyl-sn-glycero-3-phosphate + CoA. The protein operates within phospholipid metabolism; CDP-diacylglycerol biosynthesis; CDP-diacylglycerol from sn-glycerol 3-phosphate: step 2/3. Functionally, converts lysophosphatidic acid (LPA) into phosphatidic acid by incorporating acyl moiety at the 2 position. This enzyme uses erucoyl-CoA as an acyl donor. This is 1-acyl-sn-glycerol-3-phosphate acyltransferase from Limnanthes alba (White meadowfoam).